We begin with the raw amino-acid sequence, 443 residues long: Tryptophan synthase beta chain 2, chloroplastic (443 aa).

Residues 1–32 (PGPPPPAPEGRRRRGRGRNAAGQAVAAEASPA) form a disordered region. Residues 1–45 (PGPPPPAPEGRRRRGRGRNAAGQAVAAEASPAAVEMGNGAAAPGL) constitute a chloroplast transit peptide. Residues 18-32 (RNAAGQAVAAEASPA) are compositionally biased toward low complexity. Position 138 is an N6-(pyridoxal phosphate)lysine (K138).

The protein belongs to the TrpB family. Tetramer of two alpha and two beta chains. Pyridoxal 5'-phosphate is required as a cofactor.

The protein localises to the plastid. Its subcellular location is the chloroplast. It catalyses the reaction (1S,2R)-1-C-(indol-3-yl)glycerol 3-phosphate + L-serine = D-glyceraldehyde 3-phosphate + L-tryptophan + H2O. The protein operates within amino-acid biosynthesis; L-tryptophan biosynthesis; L-tryptophan from chorismate: step 5/5. Functionally, the beta subunit is responsible for the synthesis of L-tryptophan from indole and L-serine. This is Tryptophan synthase beta chain 2, chloroplastic (TSB2) from Zea mays (Maize).